The following is a 272-amino-acid chain: Putative esterase/lipase 3 (272 aa).

Residue His-34 is part of the active site. Residue Ser-100 is the Charge relay system of the active site.

The protein belongs to the lipase/esterase LIP3/BchO family.

This chain is Putative esterase/lipase 3, found in Mycoplasma pneumoniae (strain ATCC 29342 / M129 / Subtype 1) (Mycoplasmoides pneumoniae).